Reading from the N-terminus, the 396-residue chain is Elongation factor Tu (396 aa).

One can recognise a tr-type G domain in the interval 10-205; it reads KSHANIGTIG…AVDEYIPTPE (196 aa). The G1 stretch occupies residues 19–26; the sequence is GHVDHGKT. Residue 19–26 coordinates GTP; the sequence is GHVDHGKT. Mg(2+) is bound at residue threonine 26. The tract at residues 61–65 is G2; that stretch reads GITIS. The segment at 82–85 is G3; that stretch reads DCPG. GTP is bound by residues 82-86 and 137-140; these read DCPGH and NKCD. Residues 137–140 are G4; sequence NKCD. Residues 175–177 are G5; it reads SAL.

Belongs to the TRAFAC class translation factor GTPase superfamily. Classic translation factor GTPase family. EF-Tu/EF-1A subfamily. Monomer.

The protein resides in the cytoplasm. The enzyme catalyses GTP + H2O = GDP + phosphate + H(+). In terms of biological role, GTP hydrolase that promotes the GTP-dependent binding of aminoacyl-tRNA to the A-site of ribosomes during protein biosynthesis. This Bacillus licheniformis (strain ATCC 14580 / DSM 13 / JCM 2505 / CCUG 7422 / NBRC 12200 / NCIMB 9375 / NCTC 10341 / NRRL NRS-1264 / Gibson 46) protein is Elongation factor Tu.